The primary structure comprises 469 residues: MSAEHVLTMLNEHEVKFVDLRFTDTKGKEQHVTIPAHQVNAEFFEEGKMFDGSSIGGWKGINESDMVLMPDASTAVIDPFFADSTLIIRCDILEPGTLQGYDRDPRSIAKRAEDYLRATGIADTVLFGPEPEFFLFDDIRFGASISGSHVAIDDIEGAWNSSTKYEGGNKGHRPGVKGGYFPVPPVDSAQDIRSEMCLVMEQMGLVVEAHHHEVATAGQNEVATRFNTMTKKADEIQIYKYVVHNVAHRFGKTATFMPKPMFGDNGSGMHCHMSLAKNGTNLFSGDKYAGLSEQALYYIGGVIKHAKAINALANPTTNSYKRLVPGYEAPVMLAYSARNRSASIRIPVVASPKARRIEVRFPDPAANPYLCFAALLMAGLDGIKNKIHPGEAMDKNLYDLPPEEAKEIPQVAGSLEEALNALDLDREFLKAGGVFTDEAIDAYIALRREEDDRVRMTPHPVEFELYYSV.

The region spanning 13-97 is the GS beta-grasp domain; the sequence is HEVKFVDLRF…IRCDILEPGT (85 aa). A GS catalytic domain is found at 105-469; the sequence is PRSIAKRAED…PVEFELYYSV (365 aa). Residues Glu130 and Glu132 each contribute to the Mg(2+) site. Glu208 lines the ATP pocket. The Mg(2+) site is built by Glu213 and Glu221. L-glutamate-binding positions include 265–266 and Gly266; that span reads NG. Position 270 (His270) interacts with Mg(2+). ATP contacts are provided by residues 272 to 274 and Ser274; that span reads HMS. The L-glutamate site is built by Arg322, Glu328, and Arg340. ATP-binding residues include Arg340, Arg345, and Lys353. Residue Glu358 coordinates Mg(2+). L-glutamate is bound at residue Arg360. Position 398 is an O-AMP-tyrosine (Tyr398).

It belongs to the glutamine synthetase family. In terms of assembly, oligomer of 12 subunits arranged in the form of two hexagons. Mn(2+) is required as a cofactor.

Its subcellular location is the cytoplasm. The enzyme catalyses L-glutamate + NH4(+) + ATP = L-glutamine + ADP + phosphate + H(+). Its activity is regulated as follows. When cellular nitrogen levels are high, the C-terminal adenylyl transferase (AT) of GlnE inhibits GlnA by covalent transfer of an adenylyl group from ATP to Tyr-398. Conversely, when nitrogen levels are low, the N-terminal adenylyl removase (AR) of GlnE activates GlnA by removing the adenylyl group by phosphorolysis. The fully adenylated enzyme complex is inactive. Catalyzes the ATP-dependent biosynthesis of glutamine from glutamate and ammonia. In Salmonella typhi, this protein is Glutamine synthetase.